The following is a 340-amino-acid chain: Guanine nucleotide-binding protein G(I)/G(S)/G(T) subunit beta-1 (340 aa).

N-acetylserine is present on Ser-2. Ser-2 is modified (phosphoserine). WD repeat units lie at residues 46-94 (RTRR…HAIP), 95-140 (LRSS…RELA), 141-181 (GHTG…TTFT), 182-223 (GHTG…QTFT), 224-267 (GHES…YSHD), 268-309 (NIIC…GVLA), and 310-340 (GHDN…KIWN). Position 266 is a phosphohistidine (His-266).

This sequence belongs to the WD repeat G protein beta family. As to quaternary structure, g proteins are composed of 3 units, alpha, beta and gamma. The heterodimer formed by GNB1 and GNG2 interacts with ARHGEF5. The heterodimer formed by GNB1 and GNG2 interacts with GRK2. Forms a complex with GNAO1 and GNG3. Interacts with ARHGEF18 and RASD2. Forms complexes with TAS2R14 and G-proteins; these complexes play a role in the perception of bitterness. Component of the TAS2R14-GNAI1 complex, consisting of TAS2R14, GNAI1, GNB1 and GNG2. Component of the TAS2R14-GNAT3 complex, consisting of TAS2R14, GNAT3, GNB1 and GNG2. Component of the TAS2R14-GNAS2 complex, consisting of TAS2R14, GNAS2, GNB1 and GNG2. Phosphorylation at His-266 by NDKB contributes to G protein activation by increasing the high energetic phosphate transfer onto GDP.

Functionally, guanine nucleotide-binding proteins (G proteins) are involved as a modulator or transducer in various transmembrane signaling systems. The beta and gamma chains are required for the GTPase activity, for replacement of GDP by GTP, and for G protein-effector interaction. This is Guanine nucleotide-binding protein G(I)/G(S)/G(T) subunit beta-1 (GNB1) from Cricetulus griseus (Chinese hamster).